We begin with the raw amino-acid sequence, 160 residues long: Nucleotide-binding protein VV1636 (160 aa).

Belongs to the YajQ family.

Functionally, nucleotide-binding protein. The chain is Nucleotide-binding protein VV1636 from Vibrio vulnificus (strain YJ016).